A 433-amino-acid chain; its full sequence is 3-phosphoshikimate 1-carboxyvinyltransferase (433 aa).

Residues K22, S23, and R27 each contribute to the 3-phosphoshikimate site. Residue K22 coordinates phosphoenolpyruvate. The phosphoenolpyruvate site is built by G95 and R123. Residues S166, Q168, D314, and K341 each coordinate 3-phosphoshikimate. Q168 is a binding site for phosphoenolpyruvate. The active-site Proton acceptor is the D314. Phosphoenolpyruvate contacts are provided by R345 and R386.

This sequence belongs to the EPSP synthase family. In terms of assembly, monomer.

The protein localises to the cytoplasm. It catalyses the reaction 3-phosphoshikimate + phosphoenolpyruvate = 5-O-(1-carboxyvinyl)-3-phosphoshikimate + phosphate. It participates in metabolic intermediate biosynthesis; chorismate biosynthesis; chorismate from D-erythrose 4-phosphate and phosphoenolpyruvate: step 6/7. Functionally, catalyzes the transfer of the enolpyruvyl moiety of phosphoenolpyruvate (PEP) to the 5-hydroxyl of shikimate-3-phosphate (S3P) to produce enolpyruvyl shikimate-3-phosphate and inorganic phosphate. This is 3-phosphoshikimate 1-carboxyvinyltransferase from Acidithiobacillus ferrooxidans (strain ATCC 23270 / DSM 14882 / CIP 104768 / NCIMB 8455) (Ferrobacillus ferrooxidans (strain ATCC 23270)).